A 914-amino-acid chain; its full sequence is Beta-mannosidase A (914 aa).

The first 20 residues, M1–G20, serve as a signal peptide directing secretion. N-linked (GlcNAc...) asparagine glycans are attached at residues N39, N79, N230, N265, N299, N309, and N330. Residue E462 is the Proton donor of the active site. Residues N591, N614, N641, N721, N744, N773, N784, and N909 are each glycosylated (N-linked (GlcNAc...) asparagine).

The protein belongs to the glycosyl hydrolase 2 family. Beta-mannosidase A subfamily. Homodimer.

It is found in the secreted. The enzyme catalyses Hydrolysis of terminal, non-reducing beta-D-mannose residues in beta-D-mannosides.. It participates in glycan metabolism; N-glycan degradation. Functionally, exoglycosidase that cleaves the single beta-linked mannose residue from the non-reducing end of beta-mannosidic oligosaccharides of various complexity and length. Involved in the degradation of polymeric mannan and galactomannan. The sequence is that of Beta-mannosidase A (mndA) from Aspergillus oryzae (strain ATCC 42149 / RIB 40) (Yellow koji mold).